The sequence spans 187 residues: Threonylcarbamoyl-AMP synthase (187 aa).

Residues glutamate 3–glycine 187 form the YrdC-like domain.

It belongs to the SUA5 family. TsaC subfamily.

Its subcellular location is the cytoplasm. It carries out the reaction L-threonine + hydrogencarbonate + ATP = L-threonylcarbamoyladenylate + diphosphate + H2O. In terms of biological role, required for the formation of a threonylcarbamoyl group on adenosine at position 37 (t(6)A37) in tRNAs that read codons beginning with adenine. Catalyzes the conversion of L-threonine, HCO(3)(-)/CO(2) and ATP to give threonylcarbamoyl-AMP (TC-AMP) as the acyladenylate intermediate, with the release of diphosphate. This is Threonylcarbamoyl-AMP synthase from Shewanella halifaxensis (strain HAW-EB4).